A 267-amino-acid chain; its full sequence is Translation initiation factor 2 subunit alpha (267 aa).

The region spanning 12–83 (GEIVMATVER…KRKYANLSLR (72 aa)) is the S1 motif domain.

Belongs to the eIF-2-alpha family. Heterotrimer composed of an alpha, a beta and a gamma chain.

In terms of biological role, eIF-2 functions in the early steps of protein synthesis by forming a ternary complex with GTP and initiator tRNA. This chain is Translation initiation factor 2 subunit alpha, found in Methanopyrus kandleri (strain AV19 / DSM 6324 / JCM 9639 / NBRC 100938).